The following is a 333-amino-acid chain: Ribosomal RNA small subunit methyltransferase H (333 aa).

S-adenosyl-L-methionine-binding positions include 34–36 (GGH), aspartate 59, phenylalanine 86, aspartate 112, and glutamine 119.

This sequence belongs to the methyltransferase superfamily. RsmH family.

It is found in the cytoplasm. The catalysed reaction is cytidine(1402) in 16S rRNA + S-adenosyl-L-methionine = N(4)-methylcytidine(1402) in 16S rRNA + S-adenosyl-L-homocysteine + H(+). Its function is as follows. Specifically methylates the N4 position of cytidine in position 1402 (C1402) of 16S rRNA. The protein is Ribosomal RNA small subunit methyltransferase H of Prosthecochloris aestuarii (strain DSM 271 / SK 413).